The sequence spans 676 residues: UvrABC system protein B (676 aa).

The Helicase ATP-binding domain occupies Glu-26–Val-414. Gly-39 to Thr-46 is an ATP binding site. The Beta-hairpin signature appears at Tyr-92–Val-115. The 167-residue stretch at Gln-432–Met-598 folds into the Helicase C-terminal domain. The UVR domain maps to Glu-636–Gln-671.

Belongs to the UvrB family. As to quaternary structure, forms a heterotetramer with UvrA during the search for lesions. Interacts with UvrC in an incision complex.

It localises to the cytoplasm. Its function is as follows. The UvrABC repair system catalyzes the recognition and processing of DNA lesions. A damage recognition complex composed of 2 UvrA and 2 UvrB subunits scans DNA for abnormalities. Upon binding of the UvrA(2)B(2) complex to a putative damaged site, the DNA wraps around one UvrB monomer. DNA wrap is dependent on ATP binding by UvrB and probably causes local melting of the DNA helix, facilitating insertion of UvrB beta-hairpin between the DNA strands. Then UvrB probes one DNA strand for the presence of a lesion. If a lesion is found the UvrA subunits dissociate and the UvrB-DNA preincision complex is formed. This complex is subsequently bound by UvrC and the second UvrB is released. If no lesion is found, the DNA wraps around the other UvrB subunit that will check the other stand for damage. The polypeptide is UvrABC system protein B (Vibrio parahaemolyticus serotype O3:K6 (strain RIMD 2210633)).